A 309-amino-acid polypeptide reads, in one-letter code: uncharacterized protein (309 aa).

Disordered stretches follow at residues 1–94 and 286–309; these read IGEV…RQQI and HTRN…PPRG. A compositionally biased stretch (pro residues) spans 30–43; the sequence is PAQPPSPAPTPSRT. Residues 58–67 show a composition bias toward basic and acidic residues; the sequence is RSKTPDKRSA. Residues 297–309 are compositionally biased toward pro residues; the sequence is KNTPPPLEDPPRG.

This is an uncharacterized protein from Homo sapiens (Human).